The primary structure comprises 207 residues: Guanylate kinase (207 aa).

A Guanylate kinase-like domain is found at 5–184; sequence GNLFIVSAPS…ALADLRAIIR (180 aa). 12–19 contacts ATP; the sequence is APSGAGKS.

Belongs to the guanylate kinase family.

Its subcellular location is the cytoplasm. It carries out the reaction GMP + ATP = GDP + ADP. Essential for recycling GMP and indirectly, cGMP. The protein is Guanylate kinase of Shewanella oneidensis (strain ATCC 700550 / JCM 31522 / CIP 106686 / LMG 19005 / NCIMB 14063 / MR-1).